Reading from the N-terminus, the 458-residue chain is UPF0210 protein Mevan_0738 (458 aa).

Belongs to the UPF0210 family.

In Methanococcus vannielii (strain ATCC 35089 / DSM 1224 / JCM 13029 / OCM 148 / SB), this protein is UPF0210 protein Mevan_0738.